The primary structure comprises 369 residues: Putative 2-aminoethylphosphonate import ATP-binding protein PhnT (369 aa).

The ABC transporter domain occupies 19-250; that stretch reads IVLDSLRVAY…PPNRFAAEFL (232 aa). 51–58 is a binding site for ATP; that stretch reads GPSGSGKT.

This sequence belongs to the ABC transporter superfamily. 2-aminoethylphosphonate importer (TC 3.A.1.11.5) family.

The protein resides in the cell inner membrane. In terms of biological role, probably part of the PhnSTUV complex (TC 3.A.1.11.5) involved in 2-aminoethylphosphonate import. Probably responsible for energy coupling to the transport system. This is Putative 2-aminoethylphosphonate import ATP-binding protein PhnT (phnT) from Salmonella paratyphi A (strain ATCC 9150 / SARB42).